We begin with the raw amino-acid sequence, 26 residues long: Omega-conotoxin TVIA (26 aa).

Disulfide bonds link Cys-1–Cys-16, Cys-8–Cys-19, and Cys-15–Cys-26. 4-hydroxyproline is present on residues Pro-4, Pro-10, and Pro-21.

Belongs to the conotoxin O1 superfamily. In terms of tissue distribution, expressed by the venom duct.

The protein resides in the secreted. Functionally, omega-conotoxins act at presynaptic membranes, they bind and block voltage-gated calcium channels (Cav). This is Omega-conotoxin TVIA from Conus tulipa (Fish-hunting cone snail).